Here is a 564-residue protein sequence, read N- to C-terminus: Mitochondrial distribution and morphology protein 34 (564 aa).

The SMP-LTD domain maps to 1-208 (MAFNFNWSPL…VPEYRDRESE (208 aa)). Disordered regions lie at residues 208–240 (ESVN…NALN), 336–397 (SGGS…SAPT), 404–423 (QFSE…PQND), 434–517 (RISQ…DPRQ), and 532–564 (IQEE…AYGH). Residues 209 to 219 (SVNTLDQSSGP) show a composition bias toward polar residues. Basic residues predominate over residues 351-365 (SGRHPRPHGKKRKKR). Over residues 366–376 (VVDLRRPKTTD) the composition is skewed to basic and acidic residues. Positions 380–390 (SVSGESVFSSE) are enriched in low complexity. Composition is skewed to polar residues over residues 438-462 (GEHT…SRNS) and 477-503 (PRNS…SSAI).

The protein belongs to the MDM34 family. Component of the ER-mitochondria encounter structure (ERMES) or MDM complex, composed of mmm1, mdm10, mdm12 and mdm34.

It is found in the mitochondrion outer membrane. Its function is as follows. Component of the ERMES/MDM complex, which serves as a molecular tether to connect the endoplasmic reticulum (ER) and mitochondria. Components of this complex are involved in the control of mitochondrial shape and protein biogenesis, and function in nonvesicular lipid trafficking between the ER and mitochondria. Mdm34 is required for the interaction of the ER-resident membrane protein mmm1 and the outer mitochondrial membrane-resident beta-barrel protein mdm10. This chain is Mitochondrial distribution and morphology protein 34, found in Talaromyces stipitatus (strain ATCC 10500 / CBS 375.48 / QM 6759 / NRRL 1006) (Penicillium stipitatum).